The following is a 329-amino-acid chain: Chloroplast envelope quinone oxidoreductase homolog (329 aa).

R58 contributes to the substrate binding site.

Belongs to the zinc-containing alcohol dehydrogenase family. Quinone oxidoreductase subfamily. In terms of assembly, homodimer or homotetramer. Transition to monomer upon NADPH binding. Interacts with calmodulin. Interacts with HP30-1, HP30-2 and HP20.

Its subcellular location is the plastid. The protein localises to the chloroplast inner membrane. In terms of biological role, NADPH-dependent alpha,beta-unsaturated oxoene reductase reducing the double bond of medium-chain (C9) to long-chain (C18) reactive electrophile species deriving from poly-unsaturated fatty acid peroxides. The best substrates are 13-lipoxygenase-derived gamma-ketols, but is unable to reduce the double bond of short-chain alkenals and alkenones such as acrolein, crotonaldehyde, 3-buten-2-one, 4-hexen-3-one and trans-2-hexenal, or quinones such as duroquinone, decylubiquinone, coenzyme Q0, menadione, menaquinone and phylloquinone. Can use trans-2-nonenal, trans-3-decen-2-one, 4-hydroxynonenal, 12-oxo-10(E) dodecanoate (traumatin), 4-oxononenal, trans-1,3 diphenyl-2-propenone, trans-1,4-diphenyl-2-butene-1,4-dione, 9-oxo-12,13-epoxy-(10E)-octadecenoic acid (trans-EKODE-1b), 9-hydroxy-12-oxo-10(E)-octadecenoic acid, 9-Hydroxy-12-oxo-10(E),15(Z)-octadecadienoic acid and 9,13-dihydroxy-10-oxo-11-octadecenoic acid as substrates, but has no activity with 13(R,S)-hydroperoxy-9(Z),11(E)-octadecadienoic acid (13-HPOD), 9(S),12(S),13(S)-trihydroxy-10(E)-octadecenoic acid, 13-hydroxy-12-oxo-9(Z)-octadecenoic acid, 9-oxo-10(E),12(Z)-octadecadienoic acid (9-KODE), 13-oxo-9(Z),11(E)-octadecadienoic acid (13-KODE) and 12-oxo-10,15(Z)-phytodienoic acid (12-OPDA). This Arabidopsis thaliana (Mouse-ear cress) protein is Chloroplast envelope quinone oxidoreductase homolog.